A 544-amino-acid chain; its full sequence is Zinc finger and SCAN domain-containing protein 25 (544 aa).

Glycyl lysine isopeptide (Lys-Gly) (interchain with G-Cter in SUMO2) cross-links involve residues lysine 3 and lysine 22. The SCAN box domain occupies 42–124 (RLRFRQFRYQ…AMVEDLTERA (83 aa)). Lysine 128 participates in a covalent cross-link: Glycyl lysine isopeptide (Lys-Gly) (interchain with G-Cter in SUMO2). The segment at 157 to 189 (VEVKPEWGMPPGEGVQGPDPGTEEQLSQDPGDE) is disordered. Residues lysine 278 and lysine 285 each participate in a glycyl lysine isopeptide (Lys-Gly) (interchain with G-Cter in SUMO2) cross-link. 6 consecutive C2H2-type zinc fingers follow at residues 348 to 370 (FQCPECGKGFSRSSNLVRHQRTH), 375 to 397 (YGCVECGKGFTLREYLMKHQRTH), 403 to 425 (YVCSECWKTFSQRHHLEVHQRSH), 431 to 453 (YKCGDCWKSFSRRQHLQVHRRTH), 459 to 480 (YTCECGKSFSRNANLAVHRRAH), and 486 to 508 (YGCQVCGKRFSKGERLVRHQRIH). The C2H2-type 7; degenerate zinc finger occupies 514–536 (YHCPACGRSFNQRSILNRHQKTQ).

This sequence belongs to the krueppel C2H2-type zinc-finger protein family.

The protein resides in the nucleus. May be involved in transcriptional regulation. The sequence is that of Zinc finger and SCAN domain-containing protein 25 (ZSCAN25) from Homo sapiens (Human).